The sequence spans 113 residues: Prefoldin subunit beta (113 aa).

Belongs to the prefoldin subunit beta family. In terms of assembly, heterohexamer of two alpha and four beta subunits.

Its subcellular location is the cytoplasm. Its function is as follows. Molecular chaperone capable of stabilizing a range of proteins. Seems to fulfill an ATP-independent, HSP70-like function in archaeal de novo protein folding. The chain is Prefoldin subunit beta (pfdB) from Methanocaldococcus jannaschii (strain ATCC 43067 / DSM 2661 / JAL-1 / JCM 10045 / NBRC 100440) (Methanococcus jannaschii).